A 136-amino-acid chain; its full sequence is MLQPKRMKFRKMHKGRNRGFAAGSTVAFGTYGLKAVGRGRMTARQIEAARRAMTRHVKRQGKIWIRVFPDKPITEKPLEVRQGKGKGNVEYWVCQIQPGRVLYEMEGVPENLAREAFELAAAKLPFKTTFVTRTVM.

This sequence belongs to the universal ribosomal protein uL16 family. In terms of assembly, part of the 50S ribosomal subunit.

Binds 23S rRNA and is also seen to make contacts with the A and possibly P site tRNAs. In Alteromonas mediterranea (strain DSM 17117 / CIP 110805 / LMG 28347 / Deep ecotype), this protein is Large ribosomal subunit protein uL16.